Consider the following 968-residue polypeptide: RNA polymerase-associated protein RapA (968 aa).

Residues 164–334 form the Helicase ATP-binding domain; that stretch reads DVGRRHAPRV…FARLRLLDPN (171 aa). 177–184 lines the ATP pocket; it reads DEVGLGKT. Positions 280-283 match the DEAH box motif; sequence DEAH. One can recognise a Helicase C-terminal domain in the interval 490–662; it reads RVEWLMGYLT…YLASPDETEG (173 aa).

It belongs to the SNF2/RAD54 helicase family. RapA subfamily. As to quaternary structure, interacts with the RNAP. Has a higher affinity for the core RNAP than for the holoenzyme. Its ATPase activity is stimulated by binding to RNAP.

Functionally, transcription regulator that activates transcription by stimulating RNA polymerase (RNAP) recycling in case of stress conditions such as supercoiled DNA or high salt concentrations. Probably acts by releasing the RNAP, when it is trapped or immobilized on tightly supercoiled DNA. Does not activate transcription on linear DNA. Probably not involved in DNA repair. The chain is RNA polymerase-associated protein RapA from Escherichia coli O81 (strain ED1a).